The chain runs to 509 residues: Cation transporter HKT2;4 (509 aa).

Topologically, residues 1-32 (MPIRLHIFVSSARHAINSSALICRFIAFHLSP) are cytoplasmic. The next 2 membrane-spanning stretches (helical) occupy residues 33–53 (LLIH…ALVV) and 96–116 (VLTL…GLVL). Topologically, residues 117 to 164 (ESSKQNKHDPENRRVSSVTVCEQSHLEEAIPQTPSMNSTDIKRSCHKY) are cytoplasmic. 2 consecutive transmembrane segments (helical) span residues 165–185 (LVFV…LLVF) and 237–257 (GLLL…PMFL). At 258-296 (RLVIWALRGLRLAKAEEPDFMMNNSSSVGFSHLLPNLQT) the chain is on the cytoplasmic side. 2 helical membrane passes run 297–317 (IFLA…FCCL) and 353–373 (CSLV…TPSL). Over 374–400 (TKLFSACQDHKQIGPESDDRTSKGKPF) the chain is Cytoplasmic. A run of 2 helical transmembrane segments spans residues 401-421 (LKTM…LVCI) and 476-496 (SFSG…MLYG). Topologically, residues 497–509 (RLNSKDSTSARTR) are cytoplasmic.

The protein belongs to the TrkH potassium transport family. HKT (TC 2.A.38.3) subfamily. In terms of tissue distribution, expressed in spikelets, leaf blades, leaf sheaths, internodes, nodes, the base of stems and roots.

Its subcellular location is the cell membrane. The catalysed reaction is K(+)(in) = K(+)(out). It carries out the reaction Mg(2+)(in) = Mg(2+)(out). The enzyme catalyses Ca(2+)(in) = Ca(2+)(out). Functionally, high-affinity potassium transporter that does not show potassium-sodium cotransport. Potassium transport seems to be independent of sodium. Mediates transport of the divalent cations magnesium and calcium in the absence of competing potassium ions. Selectivity for potassium is dominant over divalent cations, and magnesium and calcium transport may be small and may depend on competing potassium concentrations. The chain is Cation transporter HKT2;4 from Oryza sativa subsp. japonica (Rice).